The primary structure comprises 243 residues: Protein GIGAS CELL1 (243 aa).

As to quaternary structure, interacts with APC/C activators such as FZR1, FZR2, FZR3, CDC20.1 and CDC20.5. In terms of processing, phosphorylated by CDKA-1 in complex with CYCA1-2. Expressed in rapidly dividing tissues such as shoot apical meristem and young leaves. Associated with cell division but also with specific cell types.

Negative regulator of the anaphase-promoting complex/cyclosome (APC/C) ubiquitin ligase required for proper mitotic and meiotic progression and cell fate determination. Involved in entry into both meiosis I and meiosis II. Prevents endomitosis by preferentially inhibiting APC/C(CDC20). Required for megagametophyte and endosperm development. Triggers mitotic cyclins (e.g. CYCB1-1 and CYCB1-2) accumulation. Confers immunity to bacterial pathogens (e.g. Pseudomonas syringae pv. tomato DC3000), which is associated with increased expression of disease resistance (R) genes. GIG1 and PANS1 are part of a network linking centromere cohesion and cell cycle progression through control of APC/C activity. This Arabidopsis thaliana (Mouse-ear cress) protein is Protein GIGAS CELL1 (GIG1).